The chain runs to 393 residues: Upstream-binding factor 1-like protein 1 (393 aa).

DNA-binding regions (HMG box) lie at residues 100–168 (PKRP…ARFR) and 222–288 (QKPP…DLWL). The tract at residues 308 to 393 (KNMAMTGGPD…SSGEEIEVDV (86 aa)) is disordered. Residues 365–377 (EENRKKDREKEES) show a composition bias toward basic and acidic residues.

The protein resides in the cytoplasm. It localises to the nucleus. Functionally, essential for proliferation of the inner cell mass and trophectodermal cells in peri-implantation development. The protein is Upstream-binding factor 1-like protein 1 of Homo sapiens (Human).